We begin with the raw amino-acid sequence, 208 residues long: Uracil phosphoribosyltransferase (208 aa).

Residues Arg-78, Arg-103, and 130-138 (DPMLATGGT) each bind 5-phospho-alpha-D-ribose 1-diphosphate. Uracil is bound by residues Ile-193 and 198–200 (GDA). 5-phospho-alpha-D-ribose 1-diphosphate is bound at residue Asp-199.

The protein belongs to the UPRTase family. It depends on Mg(2+) as a cofactor.

The catalysed reaction is UMP + diphosphate = 5-phospho-alpha-D-ribose 1-diphosphate + uracil. It functions in the pathway pyrimidine metabolism; UMP biosynthesis via salvage pathway; UMP from uracil: step 1/1. With respect to regulation, allosterically activated by GTP. In terms of biological role, catalyzes the conversion of uracil and 5-phospho-alpha-D-ribose 1-diphosphate (PRPP) to UMP and diphosphate. The polypeptide is Uracil phosphoribosyltransferase (Nitratidesulfovibrio vulgaris (strain DSM 19637 / Miyazaki F) (Desulfovibrio vulgaris)).